The chain runs to 537 residues: ATP synthase subunit alpha (537 aa).

174–181 (GDRQTGKT) contributes to the ATP binding site.

It belongs to the ATPase alpha/beta chains family. In terms of assembly, F-type ATPases have 2 components, CF(1) - the catalytic core - and CF(0) - the membrane proton channel. CF(1) has five subunits: alpha(3), beta(3), gamma(1), delta(1), epsilon(1). CF(0) has three main subunits: a(1), b(2) and c(9-12). The alpha and beta chains form an alternating ring which encloses part of the gamma chain. CF(1) is attached to CF(0) by a central stalk formed by the gamma and epsilon chains, while a peripheral stalk is formed by the delta and b chains.

The protein resides in the cell inner membrane. The catalysed reaction is ATP + H2O + 4 H(+)(in) = ADP + phosphate + 5 H(+)(out). In terms of biological role, produces ATP from ADP in the presence of a proton gradient across the membrane. The alpha chain is a regulatory subunit. The chain is ATP synthase subunit alpha from Verminephrobacter eiseniae (strain EF01-2).